A 204-amino-acid polypeptide reads, in one-letter code: MNRLEIENQLWEEGYESIAGCDEVGRGCLFGSVLAATVILPKGLLIEGVKDSKKLSPKRREELYEVIKKNAIAMGVGIISAEVIDQINIRQASRLAMKKSVLSLTTIDGESKIPDYILVDAENIDIAIPQSAIIKGDDRSQGIAAASIVAKVIRDRLCIRWDEEYPNYGIAQHKGYGTKLHREALLKYGPSELHRRSFLKKILK.

Residues 16–204 (ESIAGCDEVG…RRSFLKKILK (189 aa)) form the RNase H type-2 domain. Asp-22, Glu-23, and Asp-120 together coordinate a divalent metal cation.

This sequence belongs to the RNase HII family. It depends on Mn(2+) as a cofactor. Requires Mg(2+) as cofactor.

It is found in the cytoplasm. The enzyme catalyses Endonucleolytic cleavage to 5'-phosphomonoester.. In terms of biological role, endonuclease that specifically degrades the RNA of RNA-DNA hybrids. The chain is Ribonuclease HII from Alkaliphilus metalliredigens (strain QYMF).